The following is a 635-amino-acid chain: Transaminated amino acid decarboxylase (635 aa).

A Glycyl lysine isopeptide (Lys-Gly) (interchain with G-Cter in ubiquitin) cross-link involves residue Lys-588.

This sequence belongs to the TPP enzyme family. Mg(2+) serves as cofactor. Thiamine diphosphate is required as a cofactor.

The protein localises to the cytoplasm. The enzyme catalyses 4-methyl-2-oxopentanoate + H(+) = 3-methylbutanal + CO2. It catalyses the reaction (S)-3-methyl-2-oxopentanoate + H(+) = 2-methylbutanal + CO2. The catalysed reaction is indole-3-pyruvate + H(+) = indole-3-acetaldehyde + CO2. It carries out the reaction 3-phenylpyruvate + H(+) = 2-phenylacetaldehyde + CO2. The enzyme catalyses 4-methylsulfanyl-2-oxobutanoate + H(+) = 3-methylsulfanylpropanal + CO2. It catalyses the reaction 3-(4-hydroxyphenyl)pyruvate + H(+) = (4-hydroxyphenyl)acetaldehyde + CO2. It functions in the pathway amino-acid degradation; Ehrlich pathway. Functionally, one of five 2-oxo acid decarboxylases (PDC1, PDC5, PDC6, ARO10, and THI3) involved in amino acid catabolism. The enzyme catalyzes the decarboxylation of amino acids, which, in a first step, have been transaminated to the corresponding 2-oxo acids (alpha-keto-acids). In a third step, the resulting aldehydes are reduced to alcohols, collectively referred to as fusel oils or alcohols. Its preferred substrates are the transaminated amino acids derived from phenylalanine (phenylpyruvate), tryptophan (3-(indol-3-yl)pyruvate), and probably tyrosine (4-hydroxyphenylpyruvate), but also isoleucine ((3S)-3-methyl-2-oxopentanoate, also alpha-keto-beta-methylvalerate) and methionine (4-methylthio-2-oxobutanoate), whereas transaminated leucine (4-methyl-2-oxopentanoate, also alpha-keto-isocaproate) is a low efficiency substrate and transaminated valine and pyruvate are no substrates. In analogy to the pyruvate decarboxylases the enzyme may in a side-reaction catalyze condensation (or carboligation) reactions leading to the formation of 2-hydroxy ketone, collectively called acyloins. The sequence is that of Transaminated amino acid decarboxylase (ARO10) from Saccharomyces cerevisiae (strain ATCC 204508 / S288c) (Baker's yeast).